The sequence spans 367 residues: Histidinol-phosphate aminotransferase (367 aa).

Lys-225 is subject to N6-(pyridoxal phosphate)lysine.

Belongs to the class-II pyridoxal-phosphate-dependent aminotransferase family. Histidinol-phosphate aminotransferase subfamily. As to quaternary structure, homodimer. Pyridoxal 5'-phosphate serves as cofactor.

The enzyme catalyses L-histidinol phosphate + 2-oxoglutarate = 3-(imidazol-4-yl)-2-oxopropyl phosphate + L-glutamate. The protein operates within amino-acid biosynthesis; L-histidine biosynthesis; L-histidine from 5-phospho-alpha-D-ribose 1-diphosphate: step 7/9. The protein is Histidinol-phosphate aminotransferase of Hyphomonas neptunium (strain ATCC 15444).